The sequence spans 254 residues: HLA class II histocompatibility antigen, DQ alpha 1 chain (254 aa).

An N-terminal signal peptide occupies residues 1–23 (MILNKALMLGALALTTVMSPCGG). Positions 24-119 (EDIVADHVAS…EVPEVTVFSK (96 aa)) are alpha-1. Residues 24–216 (EDIVADHVAS…IPAPMSELTE (193 aa)) are Extracellular-facing. N-linked (GlcNAc...) asparagine glycosylation is found at N103 and N143. The Ig-like C1-type domain occupies 112-204 (PEVTVFSKSP…LDKPLLKHWE (93 aa)). An alpha-2 region spans residues 120 to 203 (SPVTLGQPNI…GLDKPLLKHW (84 aa)). C132 and C188 are oxidised to a cystine. A connecting peptide region spans residues 204–216 (EPEIPAPMSELTE). Residues 217 to 239 (TVVCALGLSVGLVGIVVGTVFII) traverse the membrane as a helical segment. Topologically, residues 240–254 (RGLRSVGASRHQGPL) are cytoplasmic.

Belongs to the MHC class II family. Heterodimer of an alpha and a beta subunit; also referred as MHC class II molecule. In the endoplasmic reticulum (ER) it forms a heterononamer; 3 MHC class II molecules bind to a CD74 homotrimer (also known as invariant chain or HLA class II histocompatibility antigen gamma chain). In the endosomal/lysosomal system; CD74 undergoes sequential degradation by various proteases; leaving a small fragment termed CLIP on each MHC class II molecule. MHC class II molecule interacts with HLA_DM, and HLA_DO in B-cells, in order to release CLIP and facilitate the binding of antigenic peptides.

It is found in the cell membrane. The protein localises to the endoplasmic reticulum membrane. It localises to the golgi apparatus. The protein resides in the trans-Golgi network membrane. Its subcellular location is the endosome membrane. It is found in the lysosome membrane. Binds peptides derived from antigens that access the endocytic route of antigen presenting cells (APC) and presents them on the cell surface for recognition by the CD4 T-cells. The peptide binding cleft accommodates peptides of 10-30 residues. The peptides presented by MHC class II molecules are generated mostly by degradation of proteins that access the endocytic route, where they are processed by lysosomal proteases and other hydrolases. Exogenous antigens that have been endocytosed by the APC are thus readily available for presentation via MHC II molecules, and for this reason this antigen presentation pathway is usually referred to as exogenous. As membrane proteins on their way to degradation in lysosomes as part of their normal turn-over are also contained in the endosomal/lysosomal compartments, exogenous antigens must compete with those derived from endogenous components. Autophagy is also a source of endogenous peptides, autophagosomes constitutively fuse with MHC class II loading compartments. In addition to APCs, other cells of the gastrointestinal tract, such as epithelial cells, express MHC class II molecules and CD74 and act as APCs, which is an unusual trait of the GI tract. To produce a MHC class II molecule that presents an antigen, three MHC class II molecules (heterodimers of an alpha and a beta chain) associate with a CD74 trimer in the ER to form a heterononamer. Soon after the entry of this complex into the endosomal/lysosomal system where antigen processing occurs, CD74 undergoes a sequential degradation by various proteases, including CTSS and CTSL, leaving a small fragment termed CLIP (class-II-associated invariant chain peptide). The removal of CLIP is facilitated by HLA-DM via direct binding to the alpha-beta-CLIP complex so that CLIP is released. HLA-DM stabilizes MHC class II molecules until primary high affinity antigenic peptides are bound. The MHC II molecule bound to a peptide is then transported to the cell membrane surface. In B-cells, the interaction between HLA-DM and MHC class II molecules is regulated by HLA-DO. Primary dendritic cells (DCs) also to express HLA-DO. Lysosomal microenvironment has been implicated in the regulation of antigen loading into MHC II molecules, increased acidification produces increased proteolysis and efficient peptide loading. This is HLA class II histocompatibility antigen, DQ alpha 1 chain (HLA-DQA1) from Homo sapiens (Human).